We begin with the raw amino-acid sequence, 537 residues long: uncharacterized protein (537 aa).

Positions 10–56 (HHDVEPQNVEEEPPLTGQTIVTEDKLETSAKDKKHESPSMSEDEEGS) are disordered. A compositionally biased stretch (basic and acidic residues) spans 31-46 (TEDKLETSAKDKKHES). Helical transmembrane passes span 90 to 110 (FVAT…TACI), 133 to 153 (LFIV…DIFG), 156 to 176 (WVYV…ALAY), 180 to 200 (MMAI…ANVA), 213 to 233 (GFGI…GSPI), 243 to 263 (WFYW…VLCP), 313 to 333 (PIIM…FLYL), 348 to 368 (YMGA…VVML), 393 to 413 (FLIS…FAFT), 422 to 442 (SPLI…LAMI), 457 to 477 (IAAF…LGII), and 492 to 512 (AFIS…GHLI).

It belongs to the major facilitator superfamily. CAR1 family.

The protein localises to the endoplasmic reticulum. It is found in the golgi apparatus. It localises to the membrane. This is an uncharacterized protein from Schizosaccharomyces pombe (strain 972 / ATCC 24843) (Fission yeast).